The sequence spans 230 residues: DNA mismatch repair protein MutH (230 aa).

The protein belongs to the MutH family.

It localises to the cytoplasm. In terms of biological role, sequence-specific endonuclease that cleaves unmethylated GATC sequences. It is involved in DNA mismatch repair. The chain is DNA mismatch repair protein MutH from Citrobacter koseri (strain ATCC BAA-895 / CDC 4225-83 / SGSC4696).